A 274-amino-acid chain; its full sequence is Dehydration-responsive element-binding protein 2A (274 aa).

Composition is skewed to basic and acidic residues over residues 1 to 10 (MERGEGRRGD) and 35 to 50 (KWWK…ENSS). The disordered stretch occupies residues 1 to 75 (MERGEGRRGD…KGGPENSNCA (75 aa)). The segment at residues 75-132 (AYRGVRQRTWGKWVAEIREPNRGRRLWLGSFPTALEAAHAYDEAARAMYGPTARVNFA) is a DNA-binding region (AP2/ERF).

The protein belongs to the AP2/ERF transcription factor family. ERF subfamily.

The protein resides in the nucleus. Transcriptional activator that binds specifically to the DNA sequence 5'-[AG]CCGAC-3'. Binding to the C-repeat/DRE element mediates high salinity- and dehydration-inducible transcription. The sequence is that of Dehydration-responsive element-binding protein 2A (DREB2A) from Oryza sativa subsp. indica (Rice).